Here is a 510-residue protein sequence, read N- to C-terminus: MKLAYWMYAGPAHIGTLRVASSFKNVHAIMHAPLGDDYFNVMRSMLERERDFTPVTASIVDRHVLARGSQEKVVDNINRKDKEERPDLIVLTPTCTSSILQEDLQNFVDRASTTSNSDVILADVNHYRVNELQAADRTLEQVVRYYLEKARRQGTLDQSLTKEPSANIIGIFTLGFHNQHDCRELKRLLQDLNIKVNKVIPEGGSVKDLQSLPKAWFNLVPYREIGLMTAIYLEKNFGMPYVSITPMGIVDTAECIRQIQKHVNNLIPNKKVDYEPYIDQQTRFVSQAAWFSRSIDCQNLTGKKAVVFGDATHAASITRILAREMGIRVGCTGTYCKHDTEWFKEQVQGFCDEILTTDDHTEVGDMIARIEPSAIFGTQMERHIGKRLDIPCGVISSPVHIQNFPLGYRPFLGYEGTNQIADLIYNSFTLGMEDHLLEIFGGHDTKEVITKSLSTDTDLTWNYESQLELNKIPGFVRGKIKRNTEKFARQNNITTITVEIMYAAKEALSA.

Residue D36 participates in [4Fe-4S] cluster binding. The active-site Proton donor is the D296. 431-432 (GM) is a binding site for substrate.

Belongs to the ChlB/BchB/BchZ family. In terms of assembly, protochlorophyllide reductase is composed of three subunits; ChlL, ChlN and ChlB. Forms a heterotetramer of two ChlB and two ChlN subunits. Requires [4Fe-4S] cluster as cofactor.

It localises to the plastid. The protein localises to the chloroplast. It carries out the reaction chlorophyllide a + oxidized 2[4Fe-4S]-[ferredoxin] + 2 ADP + 2 phosphate = protochlorophyllide a + reduced 2[4Fe-4S]-[ferredoxin] + 2 ATP + 2 H2O. Its pathway is porphyrin-containing compound metabolism; chlorophyll biosynthesis (light-independent). Functionally, component of the dark-operative protochlorophyllide reductase (DPOR) that uses Mg-ATP and reduced ferredoxin to reduce ring D of protochlorophyllide (Pchlide) to form chlorophyllide a (Chlide). This reaction is light-independent. The NB-protein (ChlN-ChlB) is the catalytic component of the complex. The polypeptide is Light-independent protochlorophyllide reductase subunit B (Physcomitrium patens (Spreading-leaved earth moss)).